The primary structure comprises 260 residues: Cytochrome c oxidase subunit 2 (260 aa).

Over 1-43 the chain is Mitochondrial intermembrane; the sequence is MILRSLSCRFLTIALCDAAEPWQLGFQDAATPMMQGIIDLHHD. Residues 44-64 traverse the membrane as a helical segment; it reads IFFFLILILVFVLWMLVRALW. The Mitochondrial matrix segment spans residues 65-84; the sequence is HFNEQTNPIPQRIVHGTTIE. The chain crosses the membrane as a helical span at residues 85–105; the sequence is IIWTIFPSVILLFIAIPSFAL. Residues 106-260 are Mitochondrial intermembrane-facing; sequence LYSMDGVLVD…VSNQLILQTN (155 aa). Cu cation is bound by residues histidine 189, cysteine 224, glutamate 226, cysteine 228, histidine 232, and methionine 235. Glutamate 226 contributes to the Mg(2+) binding site.

It belongs to the cytochrome c oxidase subunit 2 family. In terms of assembly, component of the cytochrome c oxidase (complex IV, CIV), a multisubunit enzyme composed of a catalytic core of 3 subunits and several supernumerary subunits. The complex exists as a monomer or a dimer and forms supercomplexes (SCs) in the inner mitochondrial membrane with ubiquinol-cytochrome c oxidoreductase (cytochrome b-c1 complex, complex III, CIII). Cu cation is required as a cofactor.

The protein localises to the mitochondrion inner membrane. The catalysed reaction is 4 Fe(II)-[cytochrome c] + O2 + 8 H(+)(in) = 4 Fe(III)-[cytochrome c] + 2 H2O + 4 H(+)(out). Component of the cytochrome c oxidase, the last enzyme in the mitochondrial electron transport chain which drives oxidative phosphorylation. The respiratory chain contains 3 multisubunit complexes succinate dehydrogenase (complex II, CII), ubiquinol-cytochrome c oxidoreductase (cytochrome b-c1 complex, complex III, CIII) and cytochrome c oxidase (complex IV, CIV), that cooperate to transfer electrons derived from NADH and succinate to molecular oxygen, creating an electrochemical gradient over the inner membrane that drives transmembrane transport and the ATP synthase. Cytochrome c oxidase is the component of the respiratory chain that catalyzes the reduction of oxygen to water. Electrons originating from reduced cytochrome c in the intermembrane space (IMS) are transferred via the dinuclear copper A center (CU(A)) of subunit 2 and heme A of subunit 1 to the active site in subunit 1, a binuclear center (BNC) formed by heme A3 and copper B (CU(B)). The BNC reduces molecular oxygen to 2 water molecules using 4 electrons from cytochrome c in the IMS and 4 protons from the mitochondrial matrix. This chain is Cytochrome c oxidase subunit 2 (COX2), found in Triticum aestivum (Wheat).